The primary structure comprises 137 residues: Venom allergen 4 (137 aa).

An N-terminal signal peptide occupies residues 1 to 19 (MKTFVLVSCLLVFTQIIYA).

The protein belongs to the ant venom allergen 2/4 family. In terms of assembly, monomer. In terms of tissue distribution, expressed by the venom gland.

The protein localises to the secreted. The polypeptide is Venom allergen 4 (Solenopsis invicta (Red imported fire ant)).